Consider the following 27-residue polypeptide: Cupiennin-4a (27 aa).

The residue at position 27 (glutamate 27) is a Glutamic acid 1-amide.

Expressed by the venom gland.

The protein localises to the secreted. The chain is Cupiennin-4a from Cupiennius salei (American wandering spider).